Reading from the N-terminus, the 812-residue chain is 5-methyltetrahydropteroyltriglutamate--homocysteine methyltransferase 3, chloroplastic (812 aa).

Residues Met1–Pro33 constitute a chloroplast transit peptide. The interval Ala13–Pro33 is disordered. The segment covering Arg17–Ser27 has biased composition (pro residues). 2 residues coordinate 5-methyltetrahydropteroyltri-L-glutamate: Lys66 and Asn164. The disordered stretch occupies residues Met430–Ser456. Residues Ile485 to Ser487 and Glu538 contribute to the L-homocysteine site. L-methionine is bound by residues Ile485–Ser487 and Glu538. 5-methyltetrahydropteroyltri-L-glutamate-binding positions include Asp543, Tyr566, Arg569–Cys570, and Trp615. Asp653 is a binding site for L-homocysteine. Asp653 contributes to the L-methionine binding site. 5 residues coordinate Zn(2+): His695, Cys697, His706, Asp710, and Glu719. The active-site Proton donor is the His749. Cys781 is a Zn(2+) binding site.

Belongs to the vitamin-B12 independent methionine synthase family. The cofactor is Zn(2+). Expressed in seeds.

The protein localises to the plastid. It localises to the chloroplast. It carries out the reaction 5-methyltetrahydropteroyltri-L-glutamate + L-homocysteine = tetrahydropteroyltri-L-glutamate + L-methionine. The protein operates within amino-acid biosynthesis; L-methionine biosynthesis via de novo pathway; L-methionine from L-homocysteine (MetE route): step 1/1. Its function is as follows. Catalyzes the transfer of a methyl group from 5-methyltetrahydrofolate to homocysteine resulting in methionine formation. This is 5-methyltetrahydropteroyltriglutamate--homocysteine methyltransferase 3, chloroplastic (MS3) from Arabidopsis thaliana (Mouse-ear cress).